The following is a 163-amino-acid chain: Secreted RxLR effector protein 135 (163 aa).

A signal peptide spans 1-20; that stretch reads MRRLYLFVLILATFLTTSHG. The short motif at 33-45 is the RxLR-dEER element; it reads RGLQEEAGEDEER. The tract at residues 94 to 127 is disordered; it reads KNAGKPKRQTPQIAATGPAKPKVQSPEEAAAVPG.

It belongs to the RxLR effector family.

It localises to the secreted. The protein resides in the host nucleus. Its subcellular location is the host cytoplasm. Its function is as follows. Secreted effector that completely suppresses the host cell death induced by cell death-inducing proteins. This is Secreted RxLR effector protein 135 from Plasmopara viticola (Downy mildew of grapevine).